The following is a 227-amino-acid chain: Phosphoribosylformylglycinamidine synthase subunit PurQ (227 aa).

The Glutamine amidotransferase type-1 domain maps to 3–225 (FAVIVFPGSN…LKQWRETYVV (223 aa)). Catalysis depends on Cys86, which acts as the Nucleophile. Residues His194 and Glu196 contribute to the active site.

As to quaternary structure, part of the FGAM synthase complex composed of 1 PurL, 1 PurQ and 2 PurS subunits.

Its subcellular location is the cytoplasm. It carries out the reaction N(2)-formyl-N(1)-(5-phospho-beta-D-ribosyl)glycinamide + L-glutamine + ATP + H2O = 2-formamido-N(1)-(5-O-phospho-beta-D-ribosyl)acetamidine + L-glutamate + ADP + phosphate + H(+). It catalyses the reaction L-glutamine + H2O = L-glutamate + NH4(+). Its pathway is purine metabolism; IMP biosynthesis via de novo pathway; 5-amino-1-(5-phospho-D-ribosyl)imidazole from N(2)-formyl-N(1)-(5-phospho-D-ribosyl)glycinamide: step 1/2. In terms of biological role, part of the phosphoribosylformylglycinamidine synthase complex involved in the purines biosynthetic pathway. Catalyzes the ATP-dependent conversion of formylglycinamide ribonucleotide (FGAR) and glutamine to yield formylglycinamidine ribonucleotide (FGAM) and glutamate. The FGAM synthase complex is composed of three subunits. PurQ produces an ammonia molecule by converting glutamine to glutamate. PurL transfers the ammonia molecule to FGAR to form FGAM in an ATP-dependent manner. PurS interacts with PurQ and PurL and is thought to assist in the transfer of the ammonia molecule from PurQ to PurL. The polypeptide is Phosphoribosylformylglycinamidine synthase subunit PurQ (Bacillus cereus (strain 03BB102)).